The primary structure comprises 225 residues: Platelet-activating factor acetylhydrolase IB subunit beta homolog (225 aa).

It belongs to the 'GDSL' lipolytic enzyme family. Platelet-activating factor acetylhydrolase IB beta/gamma subunits subfamily. In terms of assembly, does not interact with Lis-1.

This chain is Platelet-activating factor acetylhydrolase IB subunit beta homolog (Paf-AHalpha), found in Drosophila melanogaster (Fruit fly).